Here is a 541-residue protein sequence, read N- to C-terminus: Glucose-6-phosphate isomerase (541 aa).

E353 (proton donor) is an active-site residue. Catalysis depends on residues H384 and K504.

This sequence belongs to the GPI family.

The protein resides in the cytoplasm. The enzyme catalyses alpha-D-glucose 6-phosphate = beta-D-fructose 6-phosphate. It participates in carbohydrate biosynthesis; gluconeogenesis. The protein operates within carbohydrate degradation; glycolysis; D-glyceraldehyde 3-phosphate and glycerone phosphate from D-glucose: step 2/4. Its function is as follows. Catalyzes the reversible isomerization of glucose-6-phosphate to fructose-6-phosphate. This Deinococcus radiodurans (strain ATCC 13939 / DSM 20539 / JCM 16871 / CCUG 27074 / LMG 4051 / NBRC 15346 / NCIMB 9279 / VKM B-1422 / R1) protein is Glucose-6-phosphate isomerase.